The sequence spans 233 residues: MTPHINAKIGDFYPQCLLCGDPLRVSYIAKKFLQDAKEITNVRNMLGFSGKYKGKGISLMGHGMGIASCTIYVTELIKTYQVKELLRIGTCGAISPKVGLKDIIMATGASTDSKTNRVRFLNHDLSATPDFELSLRAYQTAKRLGIDLKVGNVFSSDFFYSFETHAFDLMAQYNHLAIEMEAAGLYATAMELNSKALCLCSVSDHLITKEALSPKERVESFDNMIILALEMMS.

Position 4 (H4) interacts with a purine D-ribonucleoside. Phosphate contacts are provided by residues G20, R24, R43, and 87–90 (RIGT). A purine D-ribonucleoside contacts are provided by residues 179–181 (EME) and 203–204 (SD). The active-site Proton donor is D204.

Belongs to the PNP/UDP phosphorylase family. In terms of assembly, homohexamer; trimer of homodimers.

It carries out the reaction a purine D-ribonucleoside + phosphate = a purine nucleobase + alpha-D-ribose 1-phosphate. The catalysed reaction is a purine 2'-deoxy-D-ribonucleoside + phosphate = a purine nucleobase + 2-deoxy-alpha-D-ribose 1-phosphate. Catalyzes the reversible phosphorolytic breakdown of the N-glycosidic bond in the beta-(deoxy)ribonucleoside molecules, with the formation of the corresponding free purine bases and pentose-1-phosphate. The chain is Purine nucleoside phosphorylase DeoD-type from Helicobacter pylori (strain P12).